We begin with the raw amino-acid sequence, 370 residues long: Gibberellin 3-beta-dioxygenase 2-2 (370 aa).

Residues 205-306 form the Fe2OG dioxygenase domain; it reads MTATMHLNWY…RISLGYFLGP (102 aa). The Fe cation site is built by histidine 229, aspartate 231, and histidine 287. The active site involves arginine 297.

This sequence belongs to the iron/ascorbate-dependent oxidoreductase family. GA3OX subfamily. The cofactor is L-ascorbate. Requires Fe cation as cofactor.

It catalyses the reaction gibberellin A20 + 2-oxoglutarate + O2 = gibberellin A1 + succinate + CO2. In terms of biological role, converts the inactive gibberellin precursors GA9 and GA20 in the bioactives gibberellins GA4 and GA1. In Triticum aestivum (Wheat), this protein is Gibberellin 3-beta-dioxygenase 2-2 (GA3ox2-2).